The primary structure comprises 103 residues: Ribonuclease VapC14 (103 aa).

The 72-residue stretch at 3–74 (YVLDTNVVSA…WFDDKVLRIF (72 aa)) folds into the PINc domain. Mg(2+) is bound at residue aspartate 6.

The protein belongs to the PINc/VapC protein family. It depends on Mg(2+) as a cofactor.

Toxic component of a type II toxin-antitoxin (TA) system. An RNase. The cognate antitoxin is VapB14. This is Ribonuclease VapC14 (vapC14) from Mycobacterium tuberculosis (strain CDC 1551 / Oshkosh).